The primary structure comprises 281 residues: MKGKIYSINSGIYSIKDENNNFHNLPALGVFRHKNIVPLVGDYVEFEKEKYITKIYERQNEFIRPKVANIDHIIIVMSIHEPEFQSFLVDKYMAFIESANIEPVLFNTKADLGTSKYKNEYESLGYKVYEISYKTDEWVKNIAKLFTNKTNVLMGQSGVGKTTLVNKITGSNFAVQAISKFANRGKHTTRIVQIVNVFDNGELIDTPGFSSLDINLTKQQLAYSYKQFKELGKFCKFKTCFHQNEPENFCNIKQAVKDNIIPQFRYNNYLKLLQEVENEQK.

A CP-type G domain is found at 59–212; that stretch reads QNEFIRPKVA…LIDTPGFSSL (154 aa). GTP contacts are provided by residues 108 to 111 and 155 to 163; these read TKAD and GQSGVGKTT. Zn(2+) is bound by residues Cys235, Cys240, His242, and Cys250.

Belongs to the TRAFAC class YlqF/YawG GTPase family. RsgA subfamily. Monomer. Associates with 30S ribosomal subunit, binds 16S rRNA. Requires Zn(2+) as cofactor.

It is found in the cytoplasm. In terms of biological role, one of several proteins that assist in the late maturation steps of the functional core of the 30S ribosomal subunit. Helps release RbfA from mature subunits. May play a role in the assembly of ribosomal proteins into the subunit. Circularly permuted GTPase that catalyzes slow GTP hydrolysis, GTPase activity is stimulated by the 30S ribosomal subunit. The sequence is that of Small ribosomal subunit biogenesis GTPase RsgA from Mycoplasmopsis agalactiae (strain NCTC 10123 / CIP 59.7 / PG2) (Mycoplasma agalactiae).